The chain runs to 212 residues: ER lumen protein-retaining receptor 1-B (212 aa).

Residues 1–4 (MNIF) lie on the Lumenal side of the membrane. A helical transmembrane segment spans residues 5-24 (RFLGDISHLSAIIILLLKIW). The Cytoplasmic portion of the chain corresponds to 25-32 (KSRSCAGI). A helical transmembrane segment spans residues 33 to 52 (SGKSQLLFAIVFTTRYLDLF). Residues 47–48 (RY) are interaction with the K-D-E-L motif on target proteins. Topologically, residues 53–58 (TNFISF) are lumenal. A helical membrane pass occupies residues 59–79 (YNTSMKVVYVASSYATVWMIY). At 80 to 92 (SKFKATYDGNHDT) the chain is on the cytoplasmic side. The helical transmembrane segment at 93–110 (FRVEFLIVPTAILSFLVN) threads the bilayer. Residues 111–116 (HDFTPL) are Lumenal-facing. The helical transmembrane segment at 117-135 (EILWTFSIYLESVAILPQL) threads the bilayer. At 136-149 (FMVSKTGEAETITS) the chain is on the cytoplasmic side. The helical transmembrane segment at 150-168 (HYLFALGIYRTLYLFNWIW) threads the bilayer. The interval 159–169 (RTLYLFNWIWR) is interaction with the K-D-E-L motif on target proteins. At 169 to 178 (RYQFEEFFDL) the chain is on the lumenal side. The chain crosses the membrane as a helical span at residues 179–199 (IAIVAGLVQTVLYCDFFYLYI). The Cytoplasmic portion of the chain corresponds to 200–212 (TKVLKGKKLSLPA). The segment at 204–207 (KGKK) is important for recycling of cargo proteins with the sequence motif K-D-E-L from the Golgi to the endoplasmic reticulum.

It belongs to the ERD2 family.

The protein localises to the golgi apparatus membrane. The protein resides in the cytoplasmic vesicle. It localises to the COPI-coated vesicle membrane. It is found in the endoplasmic reticulum membrane. Its subcellular location is the endoplasmic reticulum-Golgi intermediate compartment membrane. Functionally, receptor for the C-terminal sequence motif K-D-E-L that is present on endoplasmic reticulum resident proteins and that mediates their recycling from the Golgi back to the endoplasmic reticulum. The polypeptide is ER lumen protein-retaining receptor 1-B (kdelr1-b) (Xenopus laevis (African clawed frog)).